A 242-amino-acid polypeptide reads, in one-letter code: MRPLTMSGHFLLAPIPESSSDYLLPKDIKLAVLGASCVGKSAMIVRFLTKRFIGDYEPNTGKLYSRLVYVEGDQLSLQIQDTPGGIQAQDSLGQMVDSLSKCVQWAEGFLLVYSITDYESYQSIRPLYQHIRKVHPDGKAPVVIVGNKGDLLHARQVQTHEGLQLANELGSLFLEISTSENYEDVCDVFQHLCKEVSKLHSLSGERRRASIIPRPRSPNMQDLKRRFRQALSSKAKAASTLG.

Positions 17 to 241 (ESSSDYLLPK…SSKAKAASTL (225 aa)) are small GTPase-like. GTP contacts are provided by residues 34–41 (GASCVGKS), 81–85 (DTPGG), and 147–150 (NKGD).

Belongs to the small GTPase superfamily. Ras family. Interacts with UBF/UBTF.

It localises to the nucleus. It is found in the nucleolus. It carries out the reaction GTP + H2O = GDP + phosphate + H(+). Its function is as follows. Regulator of rDNA transcription. Acts in cooperation UBF/UBTF and positively regulates RNA polymerase I transcription. This Rattus norvegicus (Rat) protein is Ras-like protein family member 11A.